The sequence spans 212 residues: 3,4-dihydroxy-2-butanone 4-phosphate synthase (212 aa).

Residues 37 to 38 (RE), D42, 150 to 154 (RRGHT), and E174 contribute to the D-ribulose 5-phosphate site. E38 contacts Mg(2+). Mg(2+) is bound at residue H153.

Belongs to the DHBP synthase family. Homodimer. Mg(2+) is required as a cofactor. Requires Mn(2+) as cofactor.

The enzyme catalyses D-ribulose 5-phosphate = (2S)-2-hydroxy-3-oxobutyl phosphate + formate + H(+). It participates in cofactor biosynthesis; riboflavin biosynthesis; 2-hydroxy-3-oxobutyl phosphate from D-ribulose 5-phosphate: step 1/1. In terms of biological role, catalyzes the conversion of D-ribulose 5-phosphate to formate and 3,4-dihydroxy-2-butanone 4-phosphate. This is 3,4-dihydroxy-2-butanone 4-phosphate synthase from Histophilus somni (strain 129Pt) (Haemophilus somnus).